The primary structure comprises 96 residues: Phosphoribosyl-ATP pyrophosphatase (96 aa).

This sequence belongs to the PRA-PH family.

It is found in the cytoplasm. The enzyme catalyses 1-(5-phospho-beta-D-ribosyl)-ATP + H2O = 1-(5-phospho-beta-D-ribosyl)-5'-AMP + diphosphate + H(+). The protein operates within amino-acid biosynthesis; L-histidine biosynthesis; L-histidine from 5-phospho-alpha-D-ribose 1-diphosphate: step 2/9. In Methanococcus aeolicus (strain ATCC BAA-1280 / DSM 17508 / OCM 812 / Nankai-3), this protein is Phosphoribosyl-ATP pyrophosphatase.